Here is a 625-residue protein sequence, read N- to C-terminus: Somatic embryogenesis receptor kinase 1 (625 aa).

Residues 1–26 form the signal peptide; sequence MESSYVVFILLSLILLPNHSLWLASA. Residues 27–238 lie on the Extracellular side of the membrane; the sequence is NLEGDALHTL…STPSGYGITG (212 aa). Cysteines 58 and 65 form a disulfide. Leucine-rich repeat receptor-like protein kinase binding stretches follow at residues 59 to 78 and 97 to 102; these read TWFH…DLGN and YLELYS. 61 to 62 serves as a coordination point for brassinolide; it reads FH. 4 LRR repeats span residues 92 to 116, 118 to 140, 141 to 164, and 165 to 189; these read LKNL…LGNL, NLVS…LGKL, SKLR…LTNI, and TTLQ…SFSL. Residues asparagine 104 and asparagine 115 are each glycosylated (N-linked (GlcNAc...) asparagine). Leucine-rich repeat receptor-like protein kinase binding regions lie at residues 123-126 and 145-147; these read DLYL and FLR. Residues asparagine 150, asparagine 163, and asparagine 184 are each glycosylated (N-linked (GlcNAc...) asparagine). Positions 171 to 194 are leucine-rich repeat receptor-like protein kinase binding; the sequence is DLSNNRLSGSVPDNGSFSLFTPIS. Cysteine 202 and cysteine 210 are joined by a disulfide. Residues 239 to 259 traverse the membrane as a helical segment; that stretch reads AIAGGVAAGAALLFAAPAIAF. Over 260-625 the chain is Cytoplasmic; sequence AWWRRRKPLD…LHAVELSGPR (366 aa). Phosphoserine occurs at positions 291, 299, and 303. A Protein kinase domain is found at 302 to 589; sequence FSNKNILGRG…GLAEKWDEWQ (288 aa). 308 to 316 lines the ATP pocket; the sequence is LGRGGFGKV. A Phosphothreonine modification is found at threonine 325. Residue lysine 330 coordinates ATP. A phosphothreonine mark is found at threonine 337 and threonine 346. A phosphoserine mark is found at serine 352, serine 383, serine 386, and serine 394. The residue at position 402 (threonine 402) is a Phosphothreonine. At serine 415 the chain carries Phosphoserine. The Proton acceptor role is filled by aspartate 429. Tyrosine 456 carries the phosphotyrosine modification. Residues threonine 459, threonine 462, threonine 463, and threonine 468 each carry the phosphothreonine modification. The residue at position 476 (tyrosine 476) is a Phosphotyrosine. Serine 478 bears the Phosphoserine mark. The residue at position 479 (threonine 479) is a Phosphothreonine. Serine 483 is subject to Phosphoserine. Threonine 541 carries the post-translational modification Phosphothreonine. Tyrosine 543 carries the post-translational modification Phosphotyrosine. A Phosphothreonine modification is found at threonine 559. A phosphoserine mark is found at serine 606 and serine 612. Threonine 613 carries the post-translational modification Phosphothreonine. Residue tyrosine 614 is modified to Phosphotyrosine. The residue at position 622 (serine 622) is a Phosphoserine.

It belongs to the protein kinase superfamily. Ser/Thr protein kinase family. As to quaternary structure, monomer, homo- and heterodimer. Interacts with KAPP, CDC48A, GRF6 or GRF7, SERK2, BRI1 and SERK3/BAK1 to form the SERK1 signaling complex. Bind to BRI1 in a brassinolide-dependent manner. Heterodimer with PSKR1. Interacts with the EF-Tu receptor EFR and FLS2 in a specific ligand-induced manner. Interacts with ERECTA in a EPF2-induced manner. Interacts with ERL1 in a EPF1-induced manner. Interacts with TMM. In the presence of the signal peptide RGF1, interacts with RGI1/RGFR4/RCH2, RGI2/RGFR3/RCH1, RGI3/RGFR1, RGI4/RGFR2/SKM2 and RGI5/RGFR5. It depends on Mg(2+) as a cofactor. Glycosylated. Important for targeting to the plasma membrane. In terms of processing, intermolecular autophosphorylation. The catalytic activity of SERK1 depends on the presence of a phosphorylated Thr residue in SERK1. The phosphorylation is induced by brassinosteroids. Transphosphorylation by BRI1 occurs only on Ser-299 and Thr-462. Dephosphorylation of threonine residues by the kinase-associated protein phosphatase (KAPP) is involved in SERK1 endocytosis. Expressed in flowers, tapetum, developing microspores, all cells of the embryo sac, provascular strands and developing vascular bundles. Low expression in adult vascular tissue. Detected in root meristem.

It is found in the cell membrane. The protein localises to the endoplasmic reticulum membrane. It carries out the reaction L-seryl-[protein] + ATP = O-phospho-L-seryl-[protein] + ADP + H(+). The catalysed reaction is L-threonyl-[protein] + ATP = O-phospho-L-threonyl-[protein] + ADP + H(+). The enzyme catalyses L-tyrosyl-[protein] + ATP = O-phospho-L-tyrosyl-[protein] + ADP + H(+). With respect to regulation, inhibited by manganese. Functionally, dual specificity kinase acting on both serine/threonine- and tyrosine-containing substrates. Phosphorylates BRI1 on 'Ser-887' and CDC48 on at least one threonine residue and on 'Ser-41'. Confers embryogenic competence. Acts redundantly with SERK2 as a control point for sporophytic development controlling male gametophyte production. Involved in the brassinolide signaling pathway. Probably required during small peptide (e.g. RGF1) signaling. Involved in the perception of phytosulfokine and subsequent signal transduction. Acts as a RLK5 coreceptor and promotes high-affinity IDA sensing, thus being a positive regulator of floral abscission. The chain is Somatic embryogenesis receptor kinase 1 from Arabidopsis thaliana (Mouse-ear cress).